Consider the following 480-residue polypeptide: Glycerol-3-phosphate transporter (480 aa).

Topologically, residues Met-1–Phe-36 are cytoplasmic. A helical membrane pass occupies residues Gly-37–Gln-57. The Periplasmic portion of the chain corresponds to Ala-58 to Ala-64. Residues Glu-65–Ala-85 form a helical membrane-spanning segment. Topologically, residues Gly-86 to Arg-94 are cytoplasmic. Residues Val-95–Leu-113 form a helical membrane-spanning segment. Residues Phe-114–Ile-121 lie on the Periplasmic side of the membrane. Residues Ala-122 to Cys-142 form a helical membrane-spanning segment. Over Gly-143–Ile-161 the chain is Cytoplasmic. Residues Trp-162–Ser-181 traverse the membrane as a helical segment. Residues Ala-182 to Ser-201 lie on the Periplasmic side of the membrane. A helical membrane pass occupies residues Leu-202–Val-219. Topologically, residues Met-220–Ala-274 are cytoplasmic. The helical transmembrane segment at Asn-275 to Glu-295 threads the bilayer. Residues Val-296–Asn-300 are Periplasmic-facing. A helical membrane pass occupies residues Ile-301–Leu-321. At Cys-322–Arg-334 the chain is on the cytoplasmic side. A helical transmembrane segment spans residues Gly-335 to Met-354. Topologically, residues Asn-355–Pro-359 are periplasmic. A helical transmembrane segment spans residues Glu-360–Ile-396. Over Gly-397 to Phe-415 the chain is Cytoplasmic. Residues Thr-416 to Gln-437 form a helical membrane-spanning segment. At His-438–Asp-442 the chain is on the periplasmic side. A helical transmembrane segment spans residues Gly-443–Met-463. Over Val-464 to Thr-479 the chain is Cytoplasmic.

Belongs to the major facilitator superfamily. Organophosphate:Pi antiporter (OPA) (TC 2.A.1.4) family.

The protein localises to the cell inner membrane. Its function is as follows. Responsible for glycerol-3-phosphate uptake. This Haemophilus influenzae (strain ATCC 51907 / DSM 11121 / KW20 / Rd) protein is Glycerol-3-phosphate transporter (glpT).